Consider the following 365-residue polypeptide: Peptide chain release factor 2 (365 aa).

Position 252 is an N5-methylglutamine (Q252).

Belongs to the prokaryotic/mitochondrial release factor family. Post-translationally, methylated by PrmC. Methylation increases the termination efficiency of RF2.

The protein localises to the cytoplasm. Functionally, peptide chain release factor 2 directs the termination of translation in response to the peptide chain termination codons UGA and UAA. This is Peptide chain release factor 2 from Shigella flexneri.